Here is a 92-residue protein sequence, read N- to C-terminus: Small ribosomal subunit protein uS19 (92 aa).

It belongs to the universal ribosomal protein uS19 family.

Its function is as follows. Protein S19 forms a complex with S13 that binds strongly to the 16S ribosomal RNA. The protein is Small ribosomal subunit protein uS19 of Paracoccus denitrificans (strain Pd 1222).